The primary structure comprises 450 residues: Protein tweety homolog 1 (450 aa).

Topologically, residues 1-43 (MGAPPGYRPSAWVHLLHQLPRADFQLRPVPSGFAPRDQEYQQA) are extracellular. A helical membrane pass occupies residues 44–64 (LLLVAALAGLGLGLSLIFIAV). Residues 65–88 (YLIRFCCCRPPEPPGAKSPPPGGG) are Cytoplasmic-facing. A helical transmembrane segment spans residues 89–109 (CVTWSCIAALLVGCAGIGIGF). Residues 110–214 (YGNSETSDGV…DVTFVEEYRW (105 aa)) are Extracellular-facing. N-linked (GlcNAc...) asparagine glycosylation is present at Asn130. A helical membrane pass occupies residues 215-235 (LAYVLLLLLVLLVCLFTLLGL). The Cytoplasmic segment spans residues 236 to 240 (AKQSK). Residues 241-261 (WLVVVMTAMSLLVLVLSWGSM) form a helical membrane-spanning segment. Topologically, residues 262–390 (GLEAATAVGL…LRGLCEDALE (129 aa)) are extracellular. Disulfide bonds link Cys275–Cys385 and Cys303–Cys370. N-linked (GlcNAc...) asparagine glycosylation is found at Asn284 and Asn355. A helical membrane pass occupies residues 391–411 (GLLFLMLFSLLSAGALATTLC). Over 412–450 (SLPRAWALFPPSDDYDDTDDDDPFNPQESKRFVQWQSSI) the chain is Cytoplasmic. The segment at 428-450 (DTDDDDPFNPQESKRFVQWQSSI) is disordered. Ser440 bears the Phosphoserine mark.

Belongs to the tweety family. As to quaternary structure, homotetramer; disulfide-linked. Homodimer. In terms of processing, N-glycosylated. Contains high-mannose, hybrid and complex oligosaccharides.

It localises to the cell membrane. It catalyses the reaction chloride(in) = chloride(out). It carries out the reaction L-glutamate(out) = L-glutamate(in). Calcium-independent, swelling-dependent volume-regulated anion channel (VRAC-swell) which plays a pivotal role in the process of regulatory volume decrease (RVD) in the brain through the efflux of anions like chloride and organic osmolytes like glutamate. This chain is Protein tweety homolog 1 (Ttyh1), found in Rattus norvegicus (Rat).